Reading from the N-terminus, the 207-residue chain is Thymidylate kinase (207 aa).

Positions 11–49 (EGIDGSGKSTQARRLAEHLRDTGRDPLLTREPGGSPGAE) are disordered. ATP is bound at residue 12–19 (GIDGSGKS). Positions 24 to 38 (RLAEHLRDTGRDPLL) are enriched in basic and acidic residues.

It belongs to the thymidylate kinase family.

The enzyme catalyses dTMP + ATP = dTDP + ADP. In terms of biological role, phosphorylation of dTMP to form dTDP in both de novo and salvage pathways of dTTP synthesis. This is Thymidylate kinase from Dinoroseobacter shibae (strain DSM 16493 / NCIMB 14021 / DFL 12).